We begin with the raw amino-acid sequence, 133 residues long: Adenosine 5'-monophosphoramidase hnt1 (133 aa).

Positions 4 to 107 constitute an HIT domain; the sequence is IFCKIVKGDI…IPKPNEEYGL (104 aa). Residues 29-30, Asn81, 87-89, and 94-96 contribute to the AMP site; these read DI, HQF, and HFH. The short motif at 92–96 is the Histidine triad motif element; the sequence is HVHFH. The active-site Tele-AMP-histidine intermediate is the His94.

Belongs to the HINT family. Homodimer. Mg(2+) serves as cofactor.

It is found in the nucleus. The catalysed reaction is adenosine 5'-phosphoramidate + H2O = AMP + NH4(+). Functionally, hydrolyzes adenosine 5'-monophosphoramidate substrates such as AMP-morpholidate, AMP-N-alanine methyl ester, AMP-alpha-acetyl lysine methyl ester and AMP-NH2. The protein is Adenosine 5'-monophosphoramidase hnt1 (hnt1) of Schizosaccharomyces pombe (strain 972 / ATCC 24843) (Fission yeast).